A 402-amino-acid polypeptide reads, in one-letter code: Phosphoglycerate kinase (402 aa).

Residues Asp-24–Asn-26, Arg-40, His-63–Arg-66, Arg-122, and Arg-155 each bind substrate. Residues Lys-206, Gly-297, Glu-328, and Gly-358 to Ser-361 each bind ATP.

The protein belongs to the phosphoglycerate kinase family. In terms of assembly, monomer.

It localises to the cytoplasm. It catalyses the reaction (2R)-3-phosphoglycerate + ATP = (2R)-3-phospho-glyceroyl phosphate + ADP. Its pathway is carbohydrate degradation; glycolysis; pyruvate from D-glyceraldehyde 3-phosphate: step 2/5. In Prochlorococcus marinus (strain MIT 9312), this protein is Phosphoglycerate kinase.